The sequence spans 214 residues: MTLLAVDQLTVSRGGLAVLEGVSFSLAAGHALVLRGPNGIGKTTLLRTLAGLQPPLAGRVSMPPEGIAYAAHADGLKATLSVRENLQFWAAIHATDTVETALARMNLNALEHRAAASLSAGQKRRLGLARLLVTGRPVWVLDEPTVSLDAASVALFAEAVRAHLAAGGAALMATHIDLGLSEARVLDLAPFKARPPEAGGHRGAFDHGFDGAFL.

An ABC transporter domain is found at 4-214 (LAVDQLTVSR…FDHGFDGAFL (211 aa)). 36-43 (GPNGIGKT) lines the ATP pocket.

The protein belongs to the ABC transporter superfamily. CcmA exporter (TC 3.A.1.107) family. As to quaternary structure, the complex is composed of two ATP-binding proteins (CcmA) and two transmembrane proteins (CcmB).

The protein localises to the cell inner membrane. The catalysed reaction is heme b(in) + ATP + H2O = heme b(out) + ADP + phosphate + H(+). Part of the ABC transporter complex CcmAB involved in the biogenesis of c-type cytochromes; once thought to export heme, this seems not to be the case, but its exact role is uncertain. Responsible for energy coupling to the transport system. The protein is Cytochrome c biogenesis ATP-binding export protein CcmA of Rhodobacter capsulatus (strain ATCC BAA-309 / NBRC 16581 / SB1003).